The sequence spans 347 residues: NADH-ubiquinone oxidoreductase chain 2 (347 aa).

Transmembrane regions (helical) follow at residues 3 to 23 (PIIYTTLIMTVMSGTMLVMIS), 25 to 45 (HWLLIWIGFEMNLLAMIPVLM), 59 to 79 (YFLTQATASMMLMMAIIINLL), 89 to 109 (MFNPVAMTMMTMALAMKLGLS), 149 to 169 (INPNLMLTMAMLSILIGGWGG), 178 to 198 (IMAYSSIAHMGWMTAVLPYNT), 200 to 220 (MTILNLLIYITMTLAMFMLLI), 237 to 257 (MPVITSLMMVTLLSMGGLPPL), 274 to 294 (ESIIMPTLMAMTALLNLYFYM), and 325 to 345 (LLPTMIVLSTLVLPMTPALSS).

It belongs to the complex I subunit 2 family. Core subunit of respiratory chain NADH dehydrogenase (Complex I) which is composed of 45 different subunits. Interacts with TMEM242.

The protein localises to the mitochondrion inner membrane. The catalysed reaction is a ubiquinone + NADH + 5 H(+)(in) = a ubiquinol + NAD(+) + 4 H(+)(out). Its function is as follows. Core subunit of the mitochondrial membrane respiratory chain NADH dehydrogenase (Complex I) which catalyzes electron transfer from NADH through the respiratory chain, using ubiquinone as an electron acceptor. Essential for the catalytic activity and assembly of complex I. The protein is NADH-ubiquinone oxidoreductase chain 2 of Sus scrofa (Pig).